Consider the following 865-residue polypeptide: Lactose regulatory protein LAC9 (865 aa).

A compositionally biased stretch (polar residues) spans 1–15; the sequence is MGSRASNSPSFSSKA. Residues 1-87 are disordered; it reads MGSRASNSPS…NNNNNNNKKS (87 aa). Residues 22-34 are compositionally biased toward basic and acidic residues; that stretch reads EYKKNAVKKETIR. A compositionally biased stretch (low complexity) spans 67–85; the sequence is SNGNKNDSNANNNNNNNNK. The Zn(2+) site is built by Cys-95, Cys-98, Cys-105, Cys-112, Cys-115, and Cys-122. Residues 95-122 constitute a DNA-binding region (zn(2)-C6 fungal-type); sequence CDACRKKKWKCSKTVPTCTNCLKYNLDC. The interval 818–840 is disordered; the sequence is LQSSTTQMRPPTTSGWPDTNNFL.

The protein localises to the nucleus. In terms of biological role, positive regulatory protein, that controls induction of the lactose-galactose regulation of Kluyveromyces lactis. In Kluyveromyces lactis (strain ATCC 8585 / CBS 2359 / DSM 70799 / NBRC 1267 / NRRL Y-1140 / WM37) (Yeast), this protein is Lactose regulatory protein LAC9 (LAC9).